Consider the following 807-residue polypeptide: Glycerol-3-phosphate acyltransferase (807 aa).

An HXXXXD motif motif is present at residues 308-313 (CHRSHM).

Belongs to the GPAT/DAPAT family.

Its subcellular location is the cell inner membrane. The enzyme catalyses sn-glycerol 3-phosphate + an acyl-CoA = a 1-acyl-sn-glycero-3-phosphate + CoA. It functions in the pathway phospholipid metabolism; CDP-diacylglycerol biosynthesis; CDP-diacylglycerol from sn-glycerol 3-phosphate: step 1/3. The polypeptide is Glycerol-3-phosphate acyltransferase (Shewanella sp. (strain MR-4)).